A 164-amino-acid polypeptide reads, in one-letter code: Peptidyl-prolyl cis-trans isomerase A-like 4D (164 aa).

The PPIase cyclophilin-type domain maps to 7-163 (FFEITRDGKP…KKITIADCGQ (157 aa)).

It belongs to the cyclophilin-type PPIase family. PPIase A subfamily.

Its subcellular location is the cytoplasm. The catalysed reaction is [protein]-peptidylproline (omega=180) = [protein]-peptidylproline (omega=0). In terms of biological role, PPIases accelerate the folding of proteins. It catalyzes the cis-trans isomerization of proline imidic peptide bonds in oligopeptides. The polypeptide is Peptidyl-prolyl cis-trans isomerase A-like 4D (Homo sapiens (Human)).